The primary structure comprises 789 residues: Larval serum protein 1 beta chain (789 aa).

Residues 1 to 16 (MKIAIALLACLGLAAA) form the signal peptide.

The protein belongs to the hemocyanin family. As to quaternary structure, heterohexamer, composed of three subunits, alpha, beta and gamma. In terms of tissue distribution, larval hemolymph.

It localises to the secreted. Its subcellular location is the extracellular space. Its function is as follows. Larval storage protein (LSP) which may serve as a store of amino acids for synthesis of adult proteins. The sequence is that of Larval serum protein 1 beta chain (Lsp1beta) from Drosophila melanogaster (Fruit fly).